We begin with the raw amino-acid sequence, 512 residues long: Lysine--tRNA ligase (512 aa).

Residues Glu-408 and Glu-415 each coordinate Mg(2+).

It belongs to the class-II aminoacyl-tRNA synthetase family. In terms of assembly, homodimer. Mg(2+) is required as a cofactor.

The protein localises to the cytoplasm. It catalyses the reaction tRNA(Lys) + L-lysine + ATP = L-lysyl-tRNA(Lys) + AMP + diphosphate. The protein is Lysine--tRNA ligase of Prochlorococcus marinus (strain MIT 9515).